The chain runs to 375 residues: Chaperone protein DnaJ (375 aa).

The 64-residue stretch at 5–68 (DYYEILGVSK…KKRAQYDQFG (64 aa)) folds into the J domain. Residues 135–217 (GISKNINYDR…CYGKKVINER (83 aa)) form a CR-type zinc finger. Positions 148, 151, 165, 168, 191, 194, 205, and 208 each coordinate Zn(2+). CXXCXGXG motif repeat units follow at residues 148–155 (CHKCQGTG), 165–172 (CTKCHGRG), 191–198 (CHECEGTG), and 205–212 (CEQCYGKK).

This sequence belongs to the DnaJ family. As to quaternary structure, homodimer. It depends on Zn(2+) as a cofactor.

Its subcellular location is the cytoplasm. In terms of biological role, participates actively in the response to hyperosmotic and heat shock by preventing the aggregation of stress-denatured proteins and by disaggregating proteins, also in an autonomous, DnaK-independent fashion. Unfolded proteins bind initially to DnaJ; upon interaction with the DnaJ-bound protein, DnaK hydrolyzes its bound ATP, resulting in the formation of a stable complex. GrpE releases ADP from DnaK; ATP binding to DnaK triggers the release of the substrate protein, thus completing the reaction cycle. Several rounds of ATP-dependent interactions between DnaJ, DnaK and GrpE are required for fully efficient folding. Also involved, together with DnaK and GrpE, in the DNA replication of plasmids through activation of initiation proteins. The protein is Chaperone protein DnaJ of Ureaplasma parvum serovar 3 (strain ATCC 700970).